The sequence spans 233 residues: ATP-dependent Clp protease proteolytic subunit 1 (233 aa).

The active-site Nucleophile is the serine 136. Histidine 161 is a catalytic residue.

This sequence belongs to the peptidase S14 family. Fourteen ClpP subunits assemble into 2 heptameric rings which stack back to back to give a disk-like structure with a central cavity, resembling the structure of eukaryotic proteasomes.

The protein localises to the cytoplasm. The enzyme catalyses Hydrolysis of proteins to small peptides in the presence of ATP and magnesium. alpha-casein is the usual test substrate. In the absence of ATP, only oligopeptides shorter than five residues are hydrolyzed (such as succinyl-Leu-Tyr-|-NHMec, and Leu-Tyr-Leu-|-Tyr-Trp, in which cleavage of the -Tyr-|-Leu- and -Tyr-|-Trp bonds also occurs).. Functionally, cleaves peptides in various proteins in a process that requires ATP hydrolysis. Has a chymotrypsin-like activity. Plays a major role in the degradation of misfolded proteins. In Bifidobacterium longum (strain NCC 2705), this protein is ATP-dependent Clp protease proteolytic subunit 1.